Consider the following 513-residue polypeptide: Nuclear pore complex protein NUP58 (513 aa).

Disordered regions lie at residues Q28–Q62, S217–Q239, and R356–R513. Polar residues predominate over residues N30 to P50. 2 stretches are compositionally biased toward low complexity: residues Q51–Q62 and S217–G227. Over residues R356 to A365 the composition is skewed to basic and acidic residues. Low complexity predominate over residues S377 to Q386. The segment covering S393–G427 has biased composition (polar residues). The segment covering P428–F446 has biased composition (low complexity). 6 repeat units span residues F446–G447, F458–G459, F466–G467, F473–G474, F486–G487, and F497–G498. The 6 X 2 AA repeats of F-G stretch occupies residues F446–G498. Over residues P452–S484 the composition is skewed to polar residues. The span at S504–R513 shows a compositional bias: basic residues.

It belongs to the NUP58 family. In terms of assembly, part of the nuclear pore complex (NPC). The NPC has an eight-fold symmetrical structure comprising a central transport channel and two rings, the cytoplasmic and nuclear rings, to which eight filaments are attached. The cytoplasmic filaments have loose ends, while the nuclear filaments are joined in a distal ring, forming a nuclear basket. NPCs are highly dynamic in configuration and composition, and can be devided in 3 subcomplexes, the NUP62 subcomplex, the NUP107-160 subcomplex and the NUP93 subcomplex, containing approximately 30 different nucleoporin proteins. Interacts with GAI, NUP62, SKP1A and SKP1B. In terms of tissue distribution, ubiquitous. Higherst expression in cauline leaves, lowest in roots.

The protein localises to the nucleus envelope. It is found in the nucleus. It localises to the nuclear pore complex. Involved in nucleocytoplasmic trafficking. May have regulatory roles in the gibberellin pathway, in auxin signaling and in light perception. The sequence is that of Nuclear pore complex protein NUP58 from Arabidopsis thaliana (Mouse-ear cress).